The chain runs to 549 residues: Elongator complex protein 3 (549 aa).

Positions 84-374 (RTASGIAVVA…YRVQRDIPMP (291 aa)) constitute a Radical SAM core domain. [4Fe-4S] cluster-binding residues include C101, C111, and C114. Acetyl-CoA-binding positions include K166, 476–479 (ELHV), 499–501 (FGM), and Y532. One can recognise an N-acetyltransferase domain in the interval 398-549 (TECRDVRTRE…EGPYMVKKLD (152 aa)).

Belongs to the ELP3 family. As to quaternary structure, component of the elongator complex. Interacts with transcriptional repressors snai1 and snai2; interaction with snai1 inhibits its ubiquitination and stabilizes it. [4Fe-4S] cluster serves as cofactor.

Its subcellular location is the cytoplasm. It is found in the nucleus. It carries out the reaction uridine(34) in tRNA + acetyl-CoA + S-adenosyl-L-methionine + H2O = 5-(carboxymethyl)uridine(34) in tRNA + 5'-deoxyadenosine + L-methionine + CoA + 2 H(+). Its pathway is tRNA modification; 5-methoxycarbonylmethyl-2-thiouridine-tRNA biosynthesis. In terms of biological role, catalytic tRNA acetyltransferase subunit of the elongator complex which is required for multiple tRNA modifications, including mcm5U (5-methoxycarbonylmethyl uridine), mcm5s2U (5-methoxycarbonylmethyl-2-thiouridine), and ncm5U (5-carbamoylmethyl uridine). In the elongator complex, acts as a tRNA uridine(34) acetyltransferase by mediating formation of carboxymethyluridine in the wobble base at position 34 in tRNAs. Stabilizes transcriptional repressor snai1 by inhibiting its ubiquitination which promotes neural crest cell migration. The chain is Elongator complex protein 3 from Xenopus tropicalis (Western clawed frog).